A 508-amino-acid polypeptide reads, in one-letter code: Glycerol kinase (508 aa).

Thr14 lines the ADP pocket. ATP-binding residues include Thr14, Thr15, and Ser16. Thr14 is a sn-glycerol 3-phosphate binding site. Arg18 contributes to the ADP binding site. Sn-glycerol 3-phosphate-binding residues include Arg84, Glu85, and Tyr136. 3 residues coordinate glycerol: Arg84, Glu85, and Tyr136. His232 is modified (phosphohistidine; by HPr). Asp246 contacts sn-glycerol 3-phosphate. Positions 246 and 247 each coordinate glycerol. The ADP site is built by Thr268 and Gly311. ATP-binding residues include Thr268, Gly311, Gln315, and Gly412. ADP contacts are provided by Gly412 and Asn416.

The protein belongs to the FGGY kinase family. As to quaternary structure, homotetramer and homodimer (in equilibrium). Post-translationally, the phosphoenolpyruvate-dependent sugar phosphotransferase system (PTS), including enzyme I, and histidine-containing protein (HPr) are required for the phosphorylation, which leads to the activation of the enzyme.

It carries out the reaction glycerol + ATP = sn-glycerol 3-phosphate + ADP + H(+). The protein operates within polyol metabolism; glycerol degradation via glycerol kinase pathway; sn-glycerol 3-phosphate from glycerol: step 1/1. Activated by phosphorylation and inhibited by fructose 1,6-bisphosphate (FBP). Functionally, key enzyme in the regulation of glycerol uptake and metabolism. Catalyzes the phosphorylation of glycerol to yield sn-glycerol 3-phosphate. The chain is Glycerol kinase from Streptococcus pyogenes serotype M12 (strain MGAS2096).